The following is a 150-amino-acid chain: Meiotically up-regulated gene 108 protein (150 aa).

Positions 1 to 11 (MANRFTSSDQT) are enriched in polar residues. The interval 1-150 (MANRFTSSDQ…RDISLLGSTI (150 aa)) is disordered. A compositionally biased stretch (basic and acidic residues) spans 12–23 (QETHGHHVDKHS). Residues 83–93 (NRSSQHTGRVN) are compositionally biased toward polar residues.

The protein resides in the cytoplasm. It is found in the nucleus. Functionally, has a role in meiosis. This is Meiotically up-regulated gene 108 protein (mug108) from Schizosaccharomyces pombe (strain 972 / ATCC 24843) (Fission yeast).